Reading from the N-terminus, the 647-residue chain is Bifunctional enzyme CysN/CysC (647 aa).

The tract at residues 1–472 is sulfate adenylyltransferase; it reads MSHQSDLIAT…TEERAARFGQ (472 aa). Positions 22 to 239 constitute a tr-type G domain; that stretch reads KQLLRFITCG…LETVYIGSDR (218 aa). The G1 stretch occupies residues 31 to 38; sequence GSVDDGKS. Residue 31-38 participates in GTP binding; sequence GSVDDGKS. The segment at 89–93 is G2; that stretch reads GITID. A G3 region spans residues 110–113; the sequence is DTPG. Residues 110–114 and 165–168 contribute to the GTP site; these read DTPGH and NKMD. Residues 165–168 are G4; that stretch reads NKMD. The interval 204 to 206 is G5; that stretch reads SAL. The segment at 473 to 614 is adenylyl-sulfate kinase; that stretch reads KPATVLLTGL…FPGVTAKYDV (142 aa). ATP is bound at residue 481-488; it reads GLTGSGKT.

In the C-terminal section; belongs to the APS kinase family. It in the N-terminal section; belongs to the TRAFAC class translation factor GTPase superfamily. Classic translation factor GTPase family. CysN/NodQ subfamily. In terms of assembly, heterodimer composed of CysD, the smaller subunit, and CysNC.

The catalysed reaction is sulfate + ATP + H(+) = adenosine 5'-phosphosulfate + diphosphate. It catalyses the reaction adenosine 5'-phosphosulfate + ATP = 3'-phosphoadenylyl sulfate + ADP + H(+). It participates in sulfur metabolism; hydrogen sulfide biosynthesis; sulfite from sulfate: step 1/3. Its pathway is sulfur metabolism; hydrogen sulfide biosynthesis; sulfite from sulfate: step 2/3. Its function is as follows. With CysD forms the ATP sulfurylase (ATPS) that catalyzes the adenylation of sulfate producing adenosine 5'-phosphosulfate (APS) and diphosphate, the first enzymatic step in sulfur assimilation pathway. APS synthesis involves the formation of a high-energy phosphoric-sulfuric acid anhydride bond driven by GTP hydrolysis by CysN coupled to ATP hydrolysis by CysD. In terms of biological role, APS kinase catalyzes the synthesis of activated sulfate. The chain is Bifunctional enzyme CysN/CysC (cysNC) from Rhodopirellula baltica (strain DSM 10527 / NCIMB 13988 / SH1).